Reading from the N-terminus, the 167-residue chain is Small ribosomal subunit protein uS5 (167 aa).

The S5 DRBM domain occupies 11 to 74 (LQEKLIAVNR…EKARRAMINV (64 aa)).

It belongs to the universal ribosomal protein uS5 family. As to quaternary structure, part of the 30S ribosomal subunit. Contacts proteins S4 and S8.

With S4 and S12 plays an important role in translational accuracy. In terms of biological role, located at the back of the 30S subunit body where it stabilizes the conformation of the head with respect to the body. The sequence is that of Small ribosomal subunit protein uS5 from Serratia proteamaculans (strain 568).